The primary structure comprises 218 residues: Glutathione S-transferase Mu 1 (218 aa).

In terms of domain architecture, GST N-terminal spans 2 to 88 (PMTLGYWDVR…YLARKHGLCG (87 aa)). Residues 7–8 (YW), 46–50 (WLSEK), 59–60 (NL), and 72–73 (QS) contribute to the glutathione site. In terms of domain architecture, GST C-terminal spans 90–208 (TEEERIRVDI…KSSRFIRVPV (119 aa)). Tyr-116 is a substrate binding site.

Belongs to the GST superfamily. Mu family. As to quaternary structure, homodimer. As to expression, well expressed in rabbit liver, brain and kidney.

The protein resides in the cytoplasm. The enzyme catalyses RX + glutathione = an S-substituted glutathione + a halide anion + H(+). Its function is as follows. Conjugation of reduced glutathione to a wide number of exogenous and endogenous hydrophobic electrophiles. This is Glutathione S-transferase Mu 1 from Oryctolagus cuniculus (Rabbit).